A 225-amino-acid chain; its full sequence is 7-cyano-7-deazaguanine synthase (225 aa).

Residue 10-20 (LSGGIDSATAA) participates in ATP binding. Zn(2+)-binding residues include C191, C199, C202, and C205.

The protein belongs to the QueC family. Zn(2+) is required as a cofactor.

The catalysed reaction is 7-carboxy-7-deazaguanine + NH4(+) + ATP = 7-cyano-7-deazaguanine + ADP + phosphate + H2O + H(+). The protein operates within purine metabolism; 7-cyano-7-deazaguanine biosynthesis. Functionally, catalyzes the ATP-dependent conversion of 7-carboxy-7-deazaguanine (CDG) to 7-cyano-7-deazaguanine (preQ(0)). The polypeptide is 7-cyano-7-deazaguanine synthase (Prochlorococcus marinus (strain NATL2A)).